A 323-amino-acid chain; its full sequence is Elongation factor P--(R)-beta-lysine ligase (323 aa).

Position 74–76 (74–76 (SPE)) interacts with substrate. ATP-binding positions include 98–100 (RNE) and Asn107. Tyr116 serves as a coordination point for substrate. Residue 242 to 243 (EL) coordinates ATP. Substrate is bound at residue Glu249. Residue Gly298 participates in ATP binding.

It belongs to the class-II aminoacyl-tRNA synthetase family. EpmA subfamily. Homodimer.

The enzyme catalyses D-beta-lysine + L-lysyl-[protein] + ATP = N(6)-((3R)-3,6-diaminohexanoyl)-L-lysyl-[protein] + AMP + diphosphate + H(+). Functionally, with EpmB is involved in the beta-lysylation step of the post-translational modification of translation elongation factor P (EF-P). Catalyzes the ATP-dependent activation of (R)-beta-lysine produced by EpmB, forming a lysyl-adenylate, from which the beta-lysyl moiety is then transferred to the epsilon-amino group of a conserved specific lysine residue in EF-P. This Vibrio parahaemolyticus serotype O3:K6 (strain RIMD 2210633) protein is Elongation factor P--(R)-beta-lysine ligase.